Consider the following 360-residue polypeptide: Beta-1,3-N-acetylglucosaminyltransferase manic fringe (360 aa).

The Cytoplasmic portion of the chain corresponds to Met1 to Arg5. Residues Leu6–Gln26 traverse the membrane as a helical; Signal-anchor for type II membrane protein segment. Residues Leu27–His360 are Lumenal-facing. The disordered stretch occupies residues Thr51–Glu74. Residues Asn55–Glu74 show a composition bias toward basic and acidic residues. Arg100 contributes to the substrate binding site. Cystine bridges form between Cys139–Cys150 and Cys168–Cys231. Position 172 (Asp172) interacts with substrate. Asp173 is a Mn(2+) binding site. An N-linked (GlcNAc...) asparagine glycan is attached at Asn214. The active site involves Asp261. Mn(2+) is bound at residue His285. A disulfide bridge links Cys335 with Cys344.

The protein belongs to the glycosyltransferase 31 family. Requires Mn(2+) as cofactor.

The protein localises to the golgi apparatus membrane. The catalysed reaction is 3-O-(alpha-L-fucosyl)-L-threonyl-[EGF-like domain protein] + UDP-N-acetyl-alpha-D-glucosamine = 3-O-(N-acetyl-beta-D-glucosaminyl-(1-&gt;3)-alpha-L-fucosyl)-L-threonyl-[EGF-like domain protein] + UDP + H(+). It carries out the reaction 3-O-(alpha-L-fucosyl)-L-seryl-[EGF-like domain protein] + UDP-N-acetyl-alpha-D-glucosamine = 3-O-(N-acetyl-beta-D-glucosaminyl-(1-&gt;3)-alpha-L-fucosyl)-L-seryl-[EGF-like domain protein] + UDP + H(+). In terms of biological role, glycosyltransferase that initiates the elongation of O-linked fucose residues attached to EGF-like repeats in the extracellular domain of Notch molecules. In Danio rerio (Zebrafish), this protein is Beta-1,3-N-acetylglucosaminyltransferase manic fringe.